The sequence spans 296 residues: Malate--CoA ligase subunit alpha (296 aa).

CoA is bound by residues 17–20, lysine 43, and 96–98; these read TGDK and ITD. The active-site Tele-phosphohistidine intermediate is the histidine 251.

This sequence belongs to the succinate/malate CoA ligase alpha subunit family. In terms of assembly, heterotetramer of two alpha and two beta subunits.

The catalysed reaction is (S)-malate + ATP + CoA = (S)-malyl-CoA + ADP + phosphate. It participates in one-carbon metabolism; formaldehyde assimilation via serine pathway. The sequence is that of Malate--CoA ligase subunit alpha (mtkB) from Methylorubrum extorquens (strain ATCC 14718 / DSM 1338 / JCM 2805 / NCIMB 9133 / AM1) (Methylobacterium extorquens).